The primary structure comprises 292 residues: Large ribosomal subunit protein mL67 (292 aa).

The disordered stretch occupies residues 59–83; that stretch reads VELKSPSRLQLKSEPGNKGNPKGHG.

It belongs to the mitochondrion-specific ribosomal protein mL67 family. Component of the mitochondrial large ribosomal subunit (mt-LSU). Mature N.crassa 74S mitochondrial ribosomes consist of a small (37S) and a large (54S) subunit. The 37S small subunit contains a 16S ribosomal RNA (16S mt-rRNA) and 32 different proteins. The 54S large subunit contains a 23S rRNA (23S mt-rRNA) and 42 different proteins.

The protein resides in the mitochondrion. Its function is as follows. Component of the mitochondrial ribosome (mitoribosome), a dedicated translation machinery responsible for the synthesis of mitochondrial genome-encoded proteins, including at least some of the essential transmembrane subunits of the mitochondrial respiratory chain. The mitoribosomes are attached to the mitochondrial inner membrane and translation products are cotranslationally integrated into the membrane. mL67/MHR1 also has extraribosomal functions, being involved in regulation of mitochondrial DNA recombination, maintenance and repair, and generation of homoplasmic cells. mL67/MHR1 also acts as a transcription factor involved in regulation of RNA polymerase II-dependent transcription. In Neurospora crassa (strain ATCC 24698 / 74-OR23-1A / CBS 708.71 / DSM 1257 / FGSC 987), this protein is Large ribosomal subunit protein mL67 (mhr1).